Here is a 961-residue protein sequence, read N- to C-terminus: Vinculin (961 aa).

Repeat copies occupy residues 258–362 (ELDN…MGEL) and 371–470 (LGVD…ELKA). The tract at residues 258-470 (ELDNLTVLKK…LTQKLYELKA (213 aa)) is 2 X repeats. The segment at 720-778 (AIAPPQPPPLPTSLPPPIPELSALHLSNQNAERAPPRPPLPREGLAPVRPPPPETDDED) is disordered. Residues 723-738 (PPQPPPLPTSLPPPIP) show a composition bias toward pro residues. Thr774 is subject to Phosphothreonine.

This sequence belongs to the vinculin/alpha-catenin family. In terms of assembly, exhibits self-association properties.

It localises to the cytoplasm. The protein resides in the cytoskeleton. It is found in the cell junction. The protein localises to the adherens junction. Its subcellular location is the cell membrane. In terms of biological role, involved in cell adhesion. May be involved in the attachment of the actin-based microfilaments to the plasma membrane. This is Vinculin (Vinc) from Drosophila melanogaster (Fruit fly).